The following is a 104-amino-acid chain: Large ribosomal subunit protein uL24 (104 aa).

Belongs to the universal ribosomal protein uL24 family. In terms of assembly, part of the 50S ribosomal subunit.

One of two assembly initiator proteins, it binds directly to the 5'-end of the 23S rRNA, where it nucleates assembly of the 50S subunit. Functionally, one of the proteins that surrounds the polypeptide exit tunnel on the outside of the subunit. This chain is Large ribosomal subunit protein uL24, found in Shewanella baltica (strain OS223).